A 288-amino-acid polypeptide reads, in one-letter code: Bifunctional protein FolD (288 aa).

NADP(+)-binding positions include 166-168 and Ile-232; that span reads GAS.

Belongs to the tetrahydrofolate dehydrogenase/cyclohydrolase family. Homodimer.

It carries out the reaction (6R)-5,10-methylene-5,6,7,8-tetrahydrofolate + NADP(+) = (6R)-5,10-methenyltetrahydrofolate + NADPH. It catalyses the reaction (6R)-5,10-methenyltetrahydrofolate + H2O = (6R)-10-formyltetrahydrofolate + H(+). It participates in one-carbon metabolism; tetrahydrofolate interconversion. In terms of biological role, catalyzes the oxidation of 5,10-methylenetetrahydrofolate to 5,10-methenyltetrahydrofolate and then the hydrolysis of 5,10-methenyltetrahydrofolate to 10-formyltetrahydrofolate. This chain is Bifunctional protein FolD, found in Yersinia pseudotuberculosis serotype O:1b (strain IP 31758).